Consider the following 387-residue polypeptide: 3-ketoacyl-CoA thiolase (387 aa).

C91 (acyl-thioester intermediate) is an active-site residue. Active-site proton acceptor residues include H343 and C373.

It belongs to the thiolase-like superfamily. Thiolase family. As to quaternary structure, heterotetramer of two alpha chains (FadB) and two beta chains (FadA).

It is found in the cytoplasm. The enzyme catalyses an acyl-CoA + acetyl-CoA = a 3-oxoacyl-CoA + CoA. It functions in the pathway lipid metabolism; fatty acid beta-oxidation. In terms of biological role, catalyzes the final step of fatty acid oxidation in which acetyl-CoA is released and the CoA ester of a fatty acid two carbons shorter is formed. The sequence is that of 3-ketoacyl-CoA thiolase from Shewanella sp. (strain W3-18-1).